The following is a 129-amino-acid chain: Virion-associated protein (129 aa).

Coiled-coil stretches lie at residues 1-31 and 38-59; these read MANL…ILEL and TKES…LIND. The segment at 122–129 is capsid binding; the sequence is PAGWPNQF.

It belongs to the caulimovirus ORF III family. As to quaternary structure, homotetramer, through coiled-coil domain. Homotrimer when interacts with icosehadral capsid. Interacts with capsid protein, and with Movement protein.

The protein resides in the virion. Its subcellular location is the host cell junction. It is found in the host plasmodesma. Its function is as follows. Plays a role in virus cell-to-cell and plant-to-plant transmission. Interacts with virion icosahedral capsid and movement protein, thereby facilitating virion cell-to-cell transmission through plasmodesmata opened by viral movement protein. Also interacts with aphid transmission factor, attaching the virion to aphid stylet when the animal feeds on an virus infected plant. Aphid saliva may later detach the virion, inducing release of infectious particles when the animal feeds on a new plant. The sequence is that of Virion-associated protein from Arabidopsis thaliana (Mouse-ear cress).